Consider the following 559-residue polypeptide: Inositol-3-phosphate synthase 1 (559 aa).

Positions 67, 68, 69, 70, 141, 177, 178, 188, 191, 228, 229, 230, 231, 278, 279, 303, 306, 337, 338, 339, and 352 each coordinate NAD(+). A Phosphoserine modification is found at S279. Phosphoserine is present on S357. Residues G390, D391, D419, and S420 each coordinate NAD(+).

This sequence belongs to the myo-inositol 1-phosphate synthase family. The cofactor is NAD(+).

The protein resides in the cytoplasm. It catalyses the reaction D-glucose 6-phosphate = 1D-myo-inositol 3-phosphate. It participates in polyol metabolism; myo-inositol biosynthesis; myo-inositol from D-glucose 6-phosphate: step 1/2. In terms of biological role, key enzyme in myo-inositol biosynthesis pathway that catalyzes the conversion of glucose 6-phosphate to 1-myo-inositol 1-phosphate in a NAD-dependent manner. Rate-limiting enzyme in the synthesis of all inositol-containing compounds. The chain is Inositol-3-phosphate synthase 1 (ISYNA1) from Macaca fascicularis (Crab-eating macaque).